We begin with the raw amino-acid sequence, 228 residues long: Mediator of RNA polymerase II transcription subunit 7-A (228 aa).

Belongs to the Mediator complex subunit 7 family. As to quaternary structure, component of the Mediator complex.

It is found in the nucleus. Functionally, component of the Mediator complex, a coactivator involved in the regulated transcription of nearly all RNA polymerase II-dependent genes. Mediator functions as a bridge to convey information from gene-specific regulatory proteins to the basal RNA polymerase II transcription machinery. Mediator is recruited to promoters by direct interactions with regulatory proteins and serves as a scaffold for the assembly of a functional preinitiation complex with RNA polymerase II and the general transcription factors. This is Mediator of RNA polymerase II transcription subunit 7-A (med7-a) from Xenopus laevis (African clawed frog).